The following is a 214-amino-acid chain: ATP phosphoribosyltransferase (214 aa).

It belongs to the ATP phosphoribosyltransferase family. Short subfamily. Heteromultimer composed of HisG and HisZ subunits.

The protein localises to the cytoplasm. It catalyses the reaction 1-(5-phospho-beta-D-ribosyl)-ATP + diphosphate = 5-phospho-alpha-D-ribose 1-diphosphate + ATP. Its pathway is amino-acid biosynthesis; L-histidine biosynthesis; L-histidine from 5-phospho-alpha-D-ribose 1-diphosphate: step 1/9. Functionally, catalyzes the condensation of ATP and 5-phosphoribose 1-diphosphate to form N'-(5'-phosphoribosyl)-ATP (PR-ATP). Has a crucial role in the pathway because the rate of histidine biosynthesis seems to be controlled primarily by regulation of HisG enzymatic activity. This chain is ATP phosphoribosyltransferase, found in Methylibium petroleiphilum (strain ATCC BAA-1232 / LMG 22953 / PM1).